Reading from the N-terminus, the 483-residue chain is Protein disulfide-isomerase 5-3 (483 aa).

3 N-linked (GlcNAc...) asparagine glycosylation sites follow: Asn53, Asn74, and Asn99. The 131-residue stretch at 133–263 (EETKEEFPDG…IVKMVEGLVA (131 aa)) folds into the Thioredoxin domain. Catalysis depends on Cys170, which acts as the Nucleophile. N-linked (GlcNAc...) asparagine glycans are attached at residues Asn279, Asn326, and Asn376. Residues 442–462 (FSHFITNLCAIIGGVFTVAGI) traverse the membrane as a helical segment.

It belongs to the protein disulfide isomerase family. As to expression, widely expressed.

The protein localises to the membrane. Functionally, acts as a protein-folding catalyst that interacts with nascent polypeptides to catalyze the formation, isomerization, and reduction or oxidation of disulfide bonds. The polypeptide is Protein disulfide-isomerase 5-3 (PDIL5-3) (Arabidopsis thaliana (Mouse-ear cress)).